The primary structure comprises 369 residues: Flagellar P-ring protein (369 aa).

Residues 1 to 22 (MFNVRQLIATTLLLSCAFAAQA) form the signal peptide.

This sequence belongs to the FlgI family. In terms of assembly, the basal body constitutes a major portion of the flagellar organelle and consists of four rings (L,P,S, and M) mounted on a central rod.

The protein localises to the periplasm. Its subcellular location is the bacterial flagellum basal body. Its function is as follows. Assembles around the rod to form the L-ring and probably protects the motor/basal body from shearing forces during rotation. The sequence is that of Flagellar P-ring protein from Pseudomonas putida (strain ATCC 47054 / DSM 6125 / CFBP 8728 / NCIMB 11950 / KT2440).